The following is a 172-amino-acid chain: Adenine phosphoribosyltransferase (172 aa).

The protein belongs to the purine/pyrimidine phosphoribosyltransferase family. Homodimer.

Its subcellular location is the cytoplasm. It catalyses the reaction AMP + diphosphate = 5-phospho-alpha-D-ribose 1-diphosphate + adenine. Its pathway is purine metabolism; AMP biosynthesis via salvage pathway; AMP from adenine: step 1/1. In terms of biological role, catalyzes a salvage reaction resulting in the formation of AMP, that is energically less costly than de novo synthesis. In Exiguobacterium sp. (strain ATCC BAA-1283 / AT1b), this protein is Adenine phosphoribosyltransferase.